A 405-amino-acid polypeptide reads, in one-letter code: Secreted aspartic protease 8 (405 aa).

The first 25 residues, 1-25 (MVSIITFTKNVLVTLAFALLAQGLA), serve as a signal peptide directing secretion. Asn50 carries an N-linked (GlcNAc...) asparagine glycan. Residues 52–78 (TAHGQHHQSQQQQQQQQQQPAQKRGTV) are disordered. Positions 58 to 70 (HQSQQQQQQQQQQ) are enriched in low complexity. In terms of domain architecture, Peptidase A1 spans 89–392 (YAATITVGSN…DLDGNTISLA (304 aa)). The active site involves Asp107. Residue 107–109 (DTG) participates in pepstatin A binding. A disulfide bridge links Cys122 with Cys134. Asp292 is an active-site residue. 292–296 (DSGTT) provides a ligand contact to pepstatin A. Residues Cys327 and Cys358 are joined by a disulfide bond.

This sequence belongs to the peptidase A1 family. Monomer.

Its subcellular location is the secreted. It carries out the reaction Preferential cleavage at the carboxyl of hydrophobic amino acids, but fails to cleave 15-Leu-|-Tyr-16, 16-Tyr-|-Leu-17 and 24-Phe-|-Phe-25 of insulin B chain. Activates trypsinogen, and degrades keratin.. Functionally, secreted aspartic peptidases (SAPs) are a group of ten acidic hydrolases considered as key virulence factors. These enzymes supply the fungus with nutrient amino acids as well as are able to degrade the selected host's proteins involved in the immune defense. Moreover, acts toward human hemoglobin though limited proteolysis to generate a variety of antimicrobial hemocidins, enabling to compete with the other microorganisms of the same physiological niche using the microbicidal peptides generated from the host protein. Its function is as follows. Plays a key role in defense against host by cleaving histatin-5 (Hst 5), a peptide from human saliva that carries out fungicidal activity. The cleavage rate decreases in an order of SAP2 &gt; SAP9 &gt; SAP3 &gt; SAP7 &gt; SAP4 &gt; SAP1 &gt; SAP8. The hydrolysis of Hst 5 by SAP8 causes production of the DSHAKRHHGY, HHSHRGY and FHEKHHSHRGY peptides. This Candida albicans (Yeast) protein is Secreted aspartic protease 8.